A 604-amino-acid polypeptide reads, in one-letter code: FAD-linked oxidoreductase easE (604 aa).

The first 25 residues, 1–25, serve as a signal peptide directing secretion; the sequence is MQFLLWSTGLVALLSWLIYTQETQS. N-linked (GlcNAc...) asparagine glycans are attached at residues Asn-47, Asn-70, Asn-106, and Asn-196. The 184-residue stretch at 125–308 folds into the FAD-binding PCMH-type domain; sequence QGRIPLFTVG…TRATMRVFPD (184 aa).

The protein belongs to the oxygen-dependent FAD-linked oxidoreductase family. FAD is required as a cofactor.

Its pathway is alkaloid biosynthesis; ergot alkaloid biosynthesis. In terms of biological role, FAD-linked oxidoreductase; part of the gene cluster that mediates the biosynthesis of fungal ergot alkaloid. DmaW catalyzes the first step of ergot alkaloid biosynthesis by condensing dimethylallyl diphosphate (DMAP) and tryptophan to form 4-dimethylallyl-L-tryptophan. The second step is catalyzed by the methyltransferase easF that methylates 4-dimethylallyl-L-tryptophan in the presence of S-adenosyl-L-methionine, resulting in the formation of 4-dimethylallyl-L-abrine. The catalase easC and the FAD-dependent oxidoreductase easE then transform 4-dimethylallyl-L-abrine to chanoclavine-I which is further oxidized by easD in the presence of NAD(+), resulting in the formation of chanoclavine-I aldehyde. Chanoclavine-I aldehyde is the precursor of ergoamides and ergopeptines in Clavicipitaceae, and clavine-type alcaloids such as fumiclavine in Trichocomaceae. However, the metabolites downstream of chanoclavine-I aldehyde in Arthrodermataceae have not been identified yet. The chain is FAD-linked oxidoreductase easE from Trichophyton verrucosum (strain HKI 0517).